We begin with the raw amino-acid sequence, 211 residues long: Endoplasmic reticulum vesicle protein 25 (211 aa).

An N-terminal signal peptide occupies residues 1–19 (MKSIVSVLTLLLLINAVAA). Over 20–180 (LRFVLPAKDK…TNESTNRRVK (161 aa)) the chain is Lumenal. Residues 33–121 (PFCVRDFVKN…TKEIDLSVAI (89 aa)) form the GOLD domain. The chain crosses the membrane as a helical span at residues 181-201 (FFSVGITLALIALGVWQIIYL). Over 202 to 211 (RSYFRSKHII) the chain is Cytoplasmic.

The protein belongs to the EMP24/GP25L family.

The protein resides in the endoplasmic reticulum membrane. It is found in the golgi apparatus membrane. In terms of biological role, constituent of COPII-coated endoplasmic reticulum-derived transport vesicles. Required for efficient transport of a subset of secretory proteins to the Golgi. Facilitates retrograde transport from the Golgi to the endoplasmic reticulum. This chain is Endoplasmic reticulum vesicle protein 25 (ERV25), found in Yarrowia lipolytica (strain CLIB 122 / E 150) (Yeast).